Consider the following 459-residue polypeptide: MSTKIVETITLECETGNYHSFCPISCVSWLYQKIEDSFFLVVGTKTCGYFLQNALGVMIFAEPRYAMAELEEGDISAHLNDYEELKTLCIRIRKDRDPSVIIWIGTCTTEIIKMDLEGMAPKLEYEIGVPILVARANGLDYAFTQGEDTVLAVMAHRCPDQEFPIGESKETKKKLFPFPLLKENNLVEYANHPPLVIFGSLPSNLVSQLDTELRRQFIKVSGWLPAQRYADLPSLGDGVYVCGVNPFLSRTATTLIRRKKCELIVAPFPIGPDGTRAWIERICPVFGIEAQSLEEIEERIWESLKDYLDLVRGKSVFFMGDNLIEISIARFLIRCGMIVYEIGIPYLDKRYQAAELALLKKTCIRMCMPIPRIVEKPDNSNQIRRMRELKPDLAITGMAHANPLGARGIGTKWSVEFTFAQIHGFANARDVLELVTRPLRRNENLDNLDRTTLVRKNNK.

3 residues coordinate [4Fe-4S] cluster: Cys-22, Cys-47, and Cys-107.

This sequence belongs to the BchN/ChlN family. In terms of assembly, protochlorophyllide reductase is composed of three subunits; ChlL, ChlN and ChlB. Forms a heterotetramer of two ChlB and two ChlN subunits. Requires [4Fe-4S] cluster as cofactor.

The protein resides in the plastid. The protein localises to the chloroplast. The enzyme catalyses chlorophyllide a + oxidized 2[4Fe-4S]-[ferredoxin] + 2 ADP + 2 phosphate = protochlorophyllide a + reduced 2[4Fe-4S]-[ferredoxin] + 2 ATP + 2 H2O. Its pathway is porphyrin-containing compound metabolism; chlorophyll biosynthesis (light-independent). Functionally, component of the dark-operative protochlorophyllide reductase (DPOR) that uses Mg-ATP and reduced ferredoxin to reduce ring D of protochlorophyllide (Pchlide) to form chlorophyllide a (Chlide). This reaction is light-independent. The NB-protein (ChlN-ChlB) is the catalytic component of the complex. The chain is Light-independent protochlorophyllide reductase subunit N from Pinus contorta (Shore pine).